We begin with the raw amino-acid sequence, 158 residues long: Cyclic pyranopterin monophosphate synthase (158 aa).

Substrate contacts are provided by residues 74-76 (MCH) and 112-113 (ME). Asp127 is a catalytic residue.

It belongs to the MoaC family. In terms of assembly, homohexamer; trimer of dimers.

The enzyme catalyses (8S)-3',8-cyclo-7,8-dihydroguanosine 5'-triphosphate = cyclic pyranopterin phosphate + diphosphate. It participates in cofactor biosynthesis; molybdopterin biosynthesis. In terms of biological role, catalyzes the conversion of (8S)-3',8-cyclo-7,8-dihydroguanosine 5'-triphosphate to cyclic pyranopterin monophosphate (cPMP). This is Cyclic pyranopterin monophosphate synthase from Helicobacter pylori (strain Shi470).